A 453-amino-acid polypeptide reads, in one-letter code: Ribulose bisphosphate carboxylase large chain (453 aa).

A propeptide spanning residues 1–2 is cleaved from the precursor; the sequence is MS. P3 carries the N-acetylproline modification. An N6,N6,N6-trimethyllysine modification is found at K14. Substrate is bound by residues N123 and T173. K175 acts as the Proton acceptor in catalysis. Substrate is bound at residue K177. Residues K201, D203, and E204 each contribute to the Mg(2+) site. K201 bears the N6-carboxylysine mark. Residue H294 is the Proton acceptor of the active site. R295, H327, and S379 together coordinate substrate.

Belongs to the RuBisCO large chain family. Type I subfamily. As to quaternary structure, heterohexadecamer of 8 large chains and 8 small chains; disulfide-linked. The disulfide link is formed within the large subunit homodimers. Requires Mg(2+) as cofactor. In terms of processing, the disulfide bond which can form in the large chain dimeric partners within the hexadecamer appears to be associated with oxidative stress and protein turnover.

It is found in the plastid. The protein localises to the chloroplast. The enzyme catalyses 2 (2R)-3-phosphoglycerate + 2 H(+) = D-ribulose 1,5-bisphosphate + CO2 + H2O. The catalysed reaction is D-ribulose 1,5-bisphosphate + O2 = 2-phosphoglycolate + (2R)-3-phosphoglycerate + 2 H(+). RuBisCO catalyzes two reactions: the carboxylation of D-ribulose 1,5-bisphosphate, the primary event in carbon dioxide fixation, as well as the oxidative fragmentation of the pentose substrate in the photorespiration process. Both reactions occur simultaneously and in competition at the same active site. The sequence is that of Ribulose bisphosphate carboxylase large chain from Galium elongatum (Great marsh bedstraw).